A 264-amino-acid polypeptide reads, in one-letter code: Thiazole synthase (264 aa).

Residue K106 is the Schiff-base intermediate with DXP of the active site. 1-deoxy-D-xylulose 5-phosphate is bound by residues G167, 193–194 (AG), and 215–216 (NT).

This sequence belongs to the ThiG family. In terms of assembly, homotetramer. Forms heterodimers with either ThiH or ThiS.

It localises to the cytoplasm. It catalyses the reaction [ThiS sulfur-carrier protein]-C-terminal-Gly-aminoethanethioate + 2-iminoacetate + 1-deoxy-D-xylulose 5-phosphate = [ThiS sulfur-carrier protein]-C-terminal Gly-Gly + 2-[(2R,5Z)-2-carboxy-4-methylthiazol-5(2H)-ylidene]ethyl phosphate + 2 H2O + H(+). It functions in the pathway cofactor biosynthesis; thiamine diphosphate biosynthesis. Its function is as follows. Catalyzes the rearrangement of 1-deoxy-D-xylulose 5-phosphate (DXP) to produce the thiazole phosphate moiety of thiamine. Sulfur is provided by the thiocarboxylate moiety of the carrier protein ThiS. In vitro, sulfur can be provided by H(2)S. The sequence is that of Thiazole synthase from Thioalkalivibrio sulfidiphilus (strain HL-EbGR7).